Here is a 432-residue protein sequence, read N- to C-terminus: 3-phosphoshikimate 1-carboxyvinyltransferase (432 aa).

Residues Lys-23, Ser-24, and Arg-28 each coordinate 3-phosphoshikimate. Lys-23 serves as a coordination point for phosphoenolpyruvate. Phosphoenolpyruvate-binding residues include Gly-96 and Arg-125. 3-phosphoshikimate contacts are provided by Ser-170, Gln-172, Asp-318, and Lys-345. Gln-172 provides a ligand contact to phosphoenolpyruvate. Asp-318 (proton acceptor) is an active-site residue. Phosphoenolpyruvate contacts are provided by Arg-349 and Arg-391.

Belongs to the EPSP synthase family. Monomer.

The protein localises to the cytoplasm. It catalyses the reaction 3-phosphoshikimate + phosphoenolpyruvate = 5-O-(1-carboxyvinyl)-3-phosphoshikimate + phosphate. The protein operates within metabolic intermediate biosynthesis; chorismate biosynthesis; chorismate from D-erythrose 4-phosphate and phosphoenolpyruvate: step 6/7. Functionally, catalyzes the transfer of the enolpyruvyl moiety of phosphoenolpyruvate (PEP) to the 5-hydroxyl of shikimate-3-phosphate (S3P) to produce enolpyruvyl shikimate-3-phosphate and inorganic phosphate. The sequence is that of 3-phosphoshikimate 1-carboxyvinyltransferase from Gloeobacter violaceus (strain ATCC 29082 / PCC 7421).